The sequence spans 78 residues: Large ribosomal subunit protein eL38 (78 aa).

This sequence belongs to the eukaryotic ribosomal protein eL38 family. As to quaternary structure, component of the large ribosomal subunit (LSU). Mature yeast ribosomes consist of a small (40S) and a large (60S) subunit. The 40S small subunit contains 1 molecule of ribosomal RNA (18S rRNA) and 33 different proteins (encoded by 57 genes). The large 60S subunit contains 3 rRNA molecules (25S, 5.8S and 5S rRNA) and 46 different proteins (encoded by 81 genes).

It is found in the cytoplasm. Its function is as follows. Component of the ribosome, a large ribonucleoprotein complex responsible for the synthesis of proteins in the cell. The small ribosomal subunit (SSU) binds messenger RNAs (mRNAs) and translates the encoded message by selecting cognate aminoacyl-transfer RNA (tRNA) molecules. The large subunit (LSU) contains the ribosomal catalytic site termed the peptidyl transferase center (PTC), which catalyzes the formation of peptide bonds, thereby polymerizing the amino acids delivered by tRNAs into a polypeptide chain. The nascent polypeptides leave the ribosome through a tunnel in the LSU and interact with protein factors that function in enzymatic processing, targeting, and the membrane insertion of nascent chains at the exit of the ribosomal tunnel. The polypeptide is Large ribosomal subunit protein eL38 (Saccharomyces cerevisiae (strain ATCC 204508 / S288c) (Baker's yeast)).